The following is a 335-amino-acid chain: Spliceosome-associated protein 49 (335 aa).

RRM domains follow at residues 13–84 (IYLG…PIRV) and 101–172 (LFVG…PITV). Positions 204-223 (VTPQSTLPPGFSPATPAPTS) are disordered.

Belongs to the SF3B4 family.

The protein resides in the nucleus. The protein is Spliceosome-associated protein 49 (sap49) of Schizosaccharomyces pombe (strain 972 / ATCC 24843) (Fission yeast).